Consider the following 180-residue polypeptide: NADH-quinone oxidoreductase subunit I 1 (180 aa).

4Fe-4S ferredoxin-type domains lie at 50 to 80 (LSRD…LQKT) and 90 to 119 (EFFR…LTPD). C60, C63, C66, C70, C99, C102, C105, and C109 together coordinate [4Fe-4S] cluster.

It belongs to the complex I 23 kDa subunit family. NDH-1 is composed of 14 different subunits. Subunits NuoA, H, J, K, L, M, N constitute the membrane sector of the complex. [4Fe-4S] cluster serves as cofactor.

The protein resides in the cell inner membrane. It carries out the reaction a quinone + NADH + 5 H(+)(in) = a quinol + NAD(+) + 4 H(+)(out). In terms of biological role, NDH-1 shuttles electrons from NADH, via FMN and iron-sulfur (Fe-S) centers, to quinones in the respiratory chain. The immediate electron acceptor for the enzyme in this species is believed to be ubiquinone. Couples the redox reaction to proton translocation (for every two electrons transferred, four hydrogen ions are translocated across the cytoplasmic membrane), and thus conserves the redox energy in a proton gradient. This chain is NADH-quinone oxidoreductase subunit I 1, found in Nitrosococcus oceani (strain ATCC 19707 / BCRC 17464 / JCM 30415 / NCIMB 11848 / C-107).